Reading from the N-terminus, the 84-residue chain is Cell division topological specificity factor (84 aa).

Belongs to the MinE family.

Functionally, prevents the cell division inhibition by proteins MinC and MinD at internal division sites while permitting inhibition at polar sites. This ensures cell division at the proper site by restricting the formation of a division septum at the midpoint of the long axis of the cell. The polypeptide is Cell division topological specificity factor (Pseudomonas syringae pv. tomato (strain ATCC BAA-871 / DC3000)).